The following is a 376-amino-acid chain: Beta sliding clamp (376 aa).

The protein belongs to the beta sliding clamp family. Forms a ring-shaped head-to-tail homodimer around DNA which binds and tethers DNA polymerases and other proteins to the DNA. The DNA replisome complex has a single clamp-loading complex (3 tau and 1 each of delta, delta', psi and chi subunits) which binds 3 Pol III cores (1 core on the leading strand and 2 on the lagging strand) each with a beta sliding clamp dimer. Additional proteins in the replisome are other copies of gamma, psi and chi, Ssb, DNA helicase and RNA primase.

It localises to the cytoplasm. Its function is as follows. Confers DNA tethering and processivity to DNA polymerases and other proteins. Acts as a clamp, forming a ring around DNA (a reaction catalyzed by the clamp-loading complex) which diffuses in an ATP-independent manner freely and bidirectionally along dsDNA. Initially characterized for its ability to contact the catalytic subunit of DNA polymerase III (Pol III), a complex, multichain enzyme responsible for most of the replicative synthesis in bacteria; Pol III exhibits 3'-5' exonuclease proofreading activity. The beta chain is required for initiation of replication as well as for processivity of DNA replication. The protein is Beta sliding clamp (dnaN) of Streptomyces coelicolor (strain ATCC BAA-471 / A3(2) / M145).